The chain runs to 213 residues: Small ribosomal subunit protein uS3 (213 aa).

One can recognise a KH type-2 domain in the interval 38–106; the sequence is IRAFVKKLLY…EFSLEVNEIR (69 aa).

The protein belongs to the universal ribosomal protein uS3 family. As to quaternary structure, part of the 30S ribosomal subunit. Forms a tight complex with proteins S10 and S14.

Its function is as follows. Binds the lower part of the 30S subunit head. Binds mRNA in the 70S ribosome, positioning it for translation. The chain is Small ribosomal subunit protein uS3 from Desulfovibrio desulfuricans (strain ATCC 27774 / DSM 6949 / MB).